A 172-amino-acid chain; its full sequence is uncharacterized protein (172 aa).

The next 3 helical transmembrane spans lie at I7–I27, L59–F79, and F89–K109.

To M.jannaschii MJ0695.

Its subcellular location is the cell membrane. This is an uncharacterized protein from Methanocaldococcus jannaschii (strain ATCC 43067 / DSM 2661 / JAL-1 / JCM 10045 / NBRC 100440) (Methanococcus jannaschii).